A 598-amino-acid polypeptide reads, in one-letter code: NADH-quinone oxidoreductase subunit C/D (598 aa).

Residues 1–188 form an NADH dehydrogenase I subunit C region; the sequence is MTDSTTHDAL…DPFVLTKQKE (188 aa). Residues 212 to 598 form an NADH dehydrogenase I subunit D region; sequence DFMFLNLGPN…IDFVMSDVDR (387 aa).

The protein in the N-terminal section; belongs to the complex I 30 kDa subunit family. This sequence in the C-terminal section; belongs to the complex I 49 kDa subunit family. NDH-1 is composed of 13 different subunits. Subunits NuoB, CD, E, F, and G constitute the peripheral sector of the complex.

Its subcellular location is the cell inner membrane. The catalysed reaction is a quinone + NADH + 5 H(+)(in) = a quinol + NAD(+) + 4 H(+)(out). In terms of biological role, NDH-1 shuttles electrons from NADH, via FMN and iron-sulfur (Fe-S) centers, to quinones in the respiratory chain. The immediate electron acceptor for the enzyme in this species is believed to be ubiquinone. Couples the redox reaction to proton translocation (for every two electrons transferred, four hydrogen ions are translocated across the cytoplasmic membrane), and thus conserves the redox energy in a proton gradient. The protein is NADH-quinone oxidoreductase subunit C/D of Serratia proteamaculans (strain 568).